The chain runs to 282 residues: Bifunctional protein FolD (282 aa).

NADP(+) contacts are provided by residues 162-164 (GRS), Ser187, and Val228.

It belongs to the tetrahydrofolate dehydrogenase/cyclohydrolase family. Homodimer.

The enzyme catalyses (6R)-5,10-methylene-5,6,7,8-tetrahydrofolate + NADP(+) = (6R)-5,10-methenyltetrahydrofolate + NADPH. It catalyses the reaction (6R)-5,10-methenyltetrahydrofolate + H2O = (6R)-10-formyltetrahydrofolate + H(+). Its pathway is one-carbon metabolism; tetrahydrofolate interconversion. Its function is as follows. Catalyzes the oxidation of 5,10-methylenetetrahydrofolate to 5,10-methenyltetrahydrofolate and then the hydrolysis of 5,10-methenyltetrahydrofolate to 10-formyltetrahydrofolate. In Thermus thermophilus (strain ATCC BAA-163 / DSM 7039 / HB27), this protein is Bifunctional protein FolD.